Here is a 196-residue protein sequence, read N- to C-terminus: Nucleoid occlusion factor SlmA (196 aa).

The HTH tetR-type domain occupies 7-68 (SNRREEILQA…GLIEFIEEAL (62 aa)). The segment at residues 31 to 50 (TTVKLAKQVGVSEAALYRHF) is a DNA-binding region (H-T-H motif). Positions 65–142 (EEALMSRINR…QLRQILRERK (78 aa)) form a coiled coil.

This sequence belongs to the nucleoid occlusion factor SlmA family. Homodimer. Interacts with FtsZ.

Its subcellular location is the cytoplasm. It localises to the nucleoid. Functionally, required for nucleoid occlusion (NO) phenomenon, which prevents Z-ring formation and cell division over the nucleoid. Acts as a DNA-associated cell division inhibitor that binds simultaneously chromosomal DNA and FtsZ, and disrupts the assembly of FtsZ polymers. SlmA-DNA-binding sequences (SBS) are dispersed on non-Ter regions of the chromosome, preventing FtsZ polymerization at these regions. The polypeptide is Nucleoid occlusion factor SlmA (Vibrio atlanticus (strain LGP32) (Vibrio splendidus (strain Mel32))).